The following is a 440-amino-acid chain: UDP-N-acetylmuramoylalanine--D-glutamate ligase (440 aa).

113–119 lines the ATP pocket; that stretch reads GTNGKST.

The protein belongs to the MurCDEF family.

The protein resides in the cytoplasm. It carries out the reaction UDP-N-acetyl-alpha-D-muramoyl-L-alanine + D-glutamate + ATP = UDP-N-acetyl-alpha-D-muramoyl-L-alanyl-D-glutamate + ADP + phosphate + H(+). It functions in the pathway cell wall biogenesis; peptidoglycan biosynthesis. Its function is as follows. Cell wall formation. Catalyzes the addition of glutamate to the nucleotide precursor UDP-N-acetylmuramoyl-L-alanine (UMA). In Buchnera aphidicola subsp. Acyrthosiphon pisum (strain Tuc7), this protein is UDP-N-acetylmuramoylalanine--D-glutamate ligase.